Reading from the N-terminus, the 201-residue chain is Female-specific protein transformer (201 aa).

The tract at residues 1–117 (MDADSSSRSP…RSRSRSRTPR (117 aa)) is disordered. Residues 9-37 (SPRDTRTCARPKEKVPYFADEGRERDRVR) show a composition bias toward basic and acidic residues. Composition is skewed to basic residues over residues 38-62 (NLRH…RARS) and 99-115 (KQRR…RSRT).

It is found in the nucleus speckle. Its function is as follows. Member of the regulatory pathway controlling female somatic sexual differentiation, regulated by Sxl. Activates dsx female-specific splicing by promoting the formation of a splicing enhancer complex which consists of tra, tra2 and sr proteins. The sequence is that of Female-specific protein transformer (tra) from Drosophila hydei (Fruit fly).